The following is a 509-amino-acid chain: Photosystem II CP47 reaction center protein (509 aa).

The next 6 membrane-spanning stretches (helical) occupy residues 21–36, 101–115, 140–156, 203–218, 237–252, and 457–472; these read SVHIMHTALVAGWAGS, IVFSGLCFLAAIWHW, GIHLFLAGVGCFGFGAF, IAAGTLGILAGLFHLS, VLSSSIAAVFFAAFVV, and SFALLFFFGHIWHGAR.

It belongs to the PsbB/PsbC family. PsbB subfamily. As to quaternary structure, PSII is composed of 1 copy each of membrane proteins PsbA, PsbB, PsbC, PsbD, PsbE, PsbF, PsbH, PsbI, PsbJ, PsbK, PsbL, PsbM, PsbT, PsbX, PsbY, PsbZ, Psb30/Ycf12, at least 3 peripheral proteins of the oxygen-evolving complex and a large number of cofactors. It forms dimeric complexes. Binds multiple chlorophylls. PSII binds additional chlorophylls, carotenoids and specific lipids. serves as cofactor.

It localises to the plastid. The protein resides in the chloroplast thylakoid membrane. One of the components of the core complex of photosystem II (PSII). It binds chlorophyll and helps catalyze the primary light-induced photochemical processes of PSII. PSII is a light-driven water:plastoquinone oxidoreductase, using light energy to abstract electrons from H(2)O, generating O(2) and a proton gradient subsequently used for ATP formation. The polypeptide is Photosystem II CP47 reaction center protein (Cicer arietinum (Chickpea)).